A 96-amino-acid polypeptide reads, in one-letter code: Colicin-K immunity protein (96 aa).

The helical transmembrane segment at 73–93 (ALFYLLMAIPVGLPSFIYYTL) threads the bilayer.

The protein localises to the cell membrane. Its function is as follows. This protein is able to protect a cell, which harbors the plasmid ColK encoding colicin K, against colicin K. This Escherichia coli protein is Colicin-K immunity protein (cki).